The following is a 564-amino-acid chain: MNNSSELIAVINGFRNSGRFCDIDIVINDERINAHRLILSGASEYFSILFSSDFIDSNKYEVNLSHLDYQSVNDLIDYIYGIPLSLTNDIVKYILSTADFLQIGSAITECENYILKNLCSRNCIDFYIYADKYNNKKIETASFNTILLNILRLINDENFKYLTEESMIKFLSDDMLNIKNEDFAPLILIKWLESTQQPCTVELLRCLRISLLSPQVIKSLYSHRLVGSIYECITFLNNISFLDESFPRYHSIELISIGISNSHDKISINCYNRKKNTWDIISSRRYRCSFAVAVLDNIIYMMGGYDQSPYRSSKVIAYNTCTNSWIYDIPELKYPRSNCGGVADDEYIYCIGGIRDQDSSLISSIDRWKPSKPYWQTYAKIREPKCDMGVAMLNGLIYVIGGVVKGDTCTDTLESLSQDGWMMHQRLPIKMSNMSTIVHAGKIYISGGYNNSSVVNGISNLVLSYNPIYDEWTKLSSLNIPRINPALWSVHNKLYVGGGISDDIQTNTSETYDKEKDCWTLDNGHMLPRNYIMYKCEPIKHKYPLEKTQYTNDFLKYLESFIGS.

The BTB domain occupies 21 to 88 (CDIDIVINDE…IYGIPLSLTN (68 aa)). The BACK domain maps to 123–219 (CIDFYIYADK…SLLSPQVIKS (97 aa)). 6 Kelch repeats span residues 252-297 (IELI…VLDN), 298-346 (IIYM…ADDE), 347-395 (YIYC…MLNG), 397-441 (IYVI…VHAG), 442-492 (KIYI…SVHN), and 494-539 (LYVG…CEPI).

Interacts (via BTB domain) with host CUL3.

The protein resides in the host cytoplasm. Its function is as follows. Probable substrate-specific adapter of CUL3-containing E3 ubiquitin-protein ligases which mediate the ubiquitination and subsequent proteasomal degradation of host target proteins. The sequence is that of Kelch repeat and BTB domain-containing protein 1 (KBTB1) from Camelus.